Reading from the N-terminus, the 164-residue chain is Putative 4-hydroxy-4-methyl-2-oxoglutarate aldolase (164 aa).

Substrate-binding positions include 75 to 78 and arginine 97; that span reads GDLI. Aspartate 98 is a binding site for a divalent metal cation.

The protein belongs to the class II aldolase/RraA-like family. In terms of assembly, homotrimer. The cofactor is a divalent metal cation.

It carries out the reaction 4-hydroxy-4-methyl-2-oxoglutarate = 2 pyruvate. It catalyses the reaction oxaloacetate + H(+) = pyruvate + CO2. Its function is as follows. Catalyzes the aldol cleavage of 4-hydroxy-4-methyl-2-oxoglutarate (HMG) into 2 molecules of pyruvate. Also contains a secondary oxaloacetate (OAA) decarboxylase activity due to the common pyruvate enolate transition state formed following C-C bond cleavage in the retro-aldol and decarboxylation reactions. The sequence is that of Putative 4-hydroxy-4-methyl-2-oxoglutarate aldolase from Shewanella oneidensis (strain ATCC 700550 / JCM 31522 / CIP 106686 / LMG 19005 / NCIMB 14063 / MR-1).